Consider the following 312-residue polypeptide: DNA-directed RNA polymerase subunit alpha (312 aa).

Positions 1 to 229 (MLQYQIDRID…ELFQPLATVT (229 aa)) are alpha N-terminal domain (alpha-NTD). An alpha C-terminal domain (alpha-CTD) region spans residues 246 to 312 (IPLEELNLSV…ISIPQSRTSV (67 aa)).

This sequence belongs to the RNA polymerase alpha chain family. In cyanobacteria the RNAP catalytic core is composed of 2 alpha, 1 beta, 1 beta', 1 gamma and 1 omega subunit. When a sigma factor is associated with the core the holoenzyme is formed, which can initiate transcription.

It catalyses the reaction RNA(n) + a ribonucleoside 5'-triphosphate = RNA(n+1) + diphosphate. Functionally, DNA-dependent RNA polymerase catalyzes the transcription of DNA into RNA using the four ribonucleoside triphosphates as substrates. The sequence is that of DNA-directed RNA polymerase subunit alpha from Prochlorococcus marinus subsp. pastoris (strain CCMP1986 / NIES-2087 / MED4).